Here is a 185-residue protein sequence, read N- to C-terminus: MIKDVIKKSEEKMNKTINSLNSELATMKAGRANPTMLDRIQVEYYGSMCPLNQVANVSSPEPRLLVITPWEKPMLKEIEKAILKSDLGINPNNDGTIIRLLVPELTEETRKNLVKNVKKVGEQAKVAIRSIRKDANDKVKNFKKEGTITEDEMKKGEDDIQKVTDKFVKEIDTIVAAKEKEIMSI.

This sequence belongs to the RRF family.

The protein localises to the cytoplasm. Its function is as follows. Responsible for the release of ribosomes from messenger RNA at the termination of protein biosynthesis. May increase the efficiency of translation by recycling ribosomes from one round of translation to another. The polypeptide is Ribosome-recycling factor (Clostridium perfringens (strain ATCC 13124 / DSM 756 / JCM 1290 / NCIMB 6125 / NCTC 8237 / Type A)).